The chain runs to 88 residues: PTS system cellobiose-specific EIIB component (88 aa).

One can recognise a PTS EIIB type-3 domain in the interval 3–88 (KKRIYLFCSA…IDTLLYGKVD (86 aa)). The active-site Phosphocysteine intermediate is Cys-10. Cys-10 carries the phosphocysteine; by EIIA modification.

It localises to the cytoplasm. It carries out the reaction D-cellobiose(out) + N(pros)-phospho-L-histidyl-[protein] = 6-phospho-beta-D-glucosyl-(1-&gt;4)-D-glucose(in) + L-histidyl-[protein]. Its function is as follows. The phosphoenolpyruvate-dependent sugar phosphotransferase system (sugar PTS), a major carbohydrate active transport system, catalyzes the phosphorylation of incoming sugar substrates concomitantly with their translocation across the cell membrane. The enzyme II CelABD PTS system is involved in cellobiose transport. The polypeptide is PTS system cellobiose-specific EIIB component (Aeromonas hydrophila).